We begin with the raw amino-acid sequence, 176 residues long: Peptidyl-prolyl cis-trans isomerase cyp5 (176 aa).

The PPIase cyclophilin-type domain maps to Phe10–Glu173.

Belongs to the cyclophilin-type PPIase family.

It catalyses the reaction [protein]-peptidylproline (omega=180) = [protein]-peptidylproline (omega=0). Functionally, PPIases accelerate the folding of proteins. It catalyzes the cis-trans isomerization of proline imidic peptide bonds in oligopeptides. The protein is Peptidyl-prolyl cis-trans isomerase cyp5 (cyp5) of Rhizopus delemar (strain RA 99-880 / ATCC MYA-4621 / FGSC 9543 / NRRL 43880) (Mucormycosis agent).